We begin with the raw amino-acid sequence, 121 residues long: Small ribosomal subunit protein uS11 (121 aa).

Belongs to the universal ribosomal protein uS11 family. As to quaternary structure, part of the 30S ribosomal subunit. Interacts with proteins S7 and S18. Binds to IF-3.

Located on the platform of the 30S subunit, it bridges several disparate RNA helices of the 16S rRNA. Forms part of the Shine-Dalgarno cleft in the 70S ribosome. The chain is Small ribosomal subunit protein uS11 from Mycoplasma genitalium (strain ATCC 33530 / DSM 19775 / NCTC 10195 / G37) (Mycoplasmoides genitalium).